Reading from the N-terminus, the 372-residue chain is Lipoyl synthase (372 aa).

Positions 37, 42, 48, 63, 67, 70, and 292 each coordinate [4Fe-4S] cluster. A Radical SAM core domain is found at 49-281 (WREGTATVML…ERAALEMGFL (233 aa)). The tract at residues 338–372 (LTAELDPDEPRPPVAPAPASASPARLVPAASLIRR) is disordered. The span at 354–372 (APASASPARLVPAASLIRR) shows a compositional bias: low complexity.

It belongs to the radical SAM superfamily. Lipoyl synthase family. The cofactor is [4Fe-4S] cluster.

Its subcellular location is the cytoplasm. The enzyme catalyses [[Fe-S] cluster scaffold protein carrying a second [4Fe-4S](2+) cluster] + N(6)-octanoyl-L-lysyl-[protein] + 2 oxidized [2Fe-2S]-[ferredoxin] + 2 S-adenosyl-L-methionine + 4 H(+) = [[Fe-S] cluster scaffold protein] + N(6)-[(R)-dihydrolipoyl]-L-lysyl-[protein] + 4 Fe(3+) + 2 hydrogen sulfide + 2 5'-deoxyadenosine + 2 L-methionine + 2 reduced [2Fe-2S]-[ferredoxin]. It participates in protein modification; protein lipoylation via endogenous pathway; protein N(6)-(lipoyl)lysine from octanoyl-[acyl-carrier-protein]: step 2/2. In terms of biological role, catalyzes the radical-mediated insertion of two sulfur atoms into the C-6 and C-8 positions of the octanoyl moiety bound to the lipoyl domains of lipoate-dependent enzymes, thereby converting the octanoylated domains into lipoylated derivatives. The sequence is that of Lipoyl synthase from Sorangium cellulosum (strain So ce56) (Polyangium cellulosum (strain So ce56)).